Reading from the N-terminus, the 234-residue chain is N-acetyl-alpha-D-glucosaminyl L-malate deacetylase 1 (234 aa).

Zn(2+)-binding residues include histidine 12, aspartate 15, and histidine 113.

This sequence belongs to the PIGL family. The cofactor is Zn(2+).

The enzyme catalyses (S)-malyl N-acetyl-alpha-D-glucosaminide + H2O = (S)-malyl alpha-D-glucosaminide + acetate. Inhibited by BSH. Its function is as follows. Involved in bacillithiol (BSH) biosynthesis. Catalyzes the second step of the pathway, the deacetylation of N-acetylglucosaminylmalate (GlcNAc-Mal) to glucosamine malate (GlcN-Mal). This chain is N-acetyl-alpha-D-glucosaminyl L-malate deacetylase 1, found in Bacillus anthracis.